Here is a 358-residue protein sequence, read N- to C-terminus: NADH-quinone oxidoreductase subunit H (358 aa).

The next 8 membrane-spanning stretches (helical) occupy residues 20-40 (ITVGLVVSVIVKIVIILIPLI), 95-115 (ALFYIGPIMSLAPSFAAWAVI), 128-148 (IGLLYILMITSLSVYGVIIAG), 168-188 (ISYEIAMSAALVCVVMVSGSM), 206-226 (VFSWNWLPLFPIFIVYLISAV), 253-273 (GFAFALFFLAEYIFMILIAAL), 295-315 (TPSAFWMFAKMAAVLYWYLWI), and 334-354 (VLIPIGFAYIVILGVWMISPL).

The protein belongs to the complex I subunit 1 family. In terms of assembly, NDH-1 is composed of 14 different subunits. Subunits NuoA, H, J, K, L, M, N constitute the membrane sector of the complex.

The protein resides in the cell inner membrane. The enzyme catalyses a quinone + NADH + 5 H(+)(in) = a quinol + NAD(+) + 4 H(+)(out). In terms of biological role, NDH-1 shuttles electrons from NADH, via FMN and iron-sulfur (Fe-S) centers, to quinones in the respiratory chain. The immediate electron acceptor for the enzyme in this species is believed to be ubiquinone. Couples the redox reaction to proton translocation (for every two electrons transferred, four hydrogen ions are translocated across the cytoplasmic membrane), and thus conserves the redox energy in a proton gradient. This subunit may bind ubiquinone. The chain is NADH-quinone oxidoreductase subunit H from Neisseria meningitidis serogroup B (strain ATCC BAA-335 / MC58).